The chain runs to 221 residues: ATP synthase subunit delta (221 aa).

Basic and acidic residues predominate over residues 1–13; that stretch reads MGPVPEEHQRESE. The interval 1 to 31 is disordered; it reads MGPVPEEHQRESETVASNGANESGAAVTGIP.

The protein belongs to the ATPase delta chain family. F-type ATPases have 2 components, F(1) - the catalytic core - and F(0) - the membrane proton channel. F(1) has five subunits: alpha(3), beta(3), gamma(1), delta(1), epsilon(1). F(0) has three main subunits: a(1), b(2) and c(10-14). The alpha and beta chains form an alternating ring which encloses part of the gamma chain. F(1) is attached to F(0) by a central stalk formed by the gamma and epsilon chains, while a peripheral stalk is formed by the delta and b chains.

It is found in the cell inner membrane. Its function is as follows. F(1)F(0) ATP synthase produces ATP from ADP in the presence of a proton or sodium gradient. F-type ATPases consist of two structural domains, F(1) containing the extramembraneous catalytic core and F(0) containing the membrane proton channel, linked together by a central stalk and a peripheral stalk. During catalysis, ATP synthesis in the catalytic domain of F(1) is coupled via a rotary mechanism of the central stalk subunits to proton translocation. Functionally, this protein is part of the stalk that links CF(0) to CF(1). It either transmits conformational changes from CF(0) to CF(1) or is implicated in proton conduction. The protein is ATP synthase subunit delta of Granulibacter bethesdensis (strain ATCC BAA-1260 / CGDNIH1).